Consider the following 872-residue polypeptide: Valine--tRNA ligase (872 aa).

The short motif at 45–55 is the 'HIGH' region element; that stretch reads PYPTGNLHIGN. The short motif at 524 to 528 is the 'KMSKS' region element; sequence KMSKS. Lys-527 is a binding site for ATP.

This sequence belongs to the class-I aminoacyl-tRNA synthetase family. ValS type 2 subfamily.

It is found in the cytoplasm. It carries out the reaction tRNA(Val) + L-valine + ATP = L-valyl-tRNA(Val) + AMP + diphosphate. Catalyzes the attachment of valine to tRNA(Val). As ValRS can inadvertently accommodate and process structurally similar amino acids such as threonine, to avoid such errors, it has a 'posttransfer' editing activity that hydrolyzes mischarged Thr-tRNA(Val) in a tRNA-dependent manner. This is Valine--tRNA ligase from Natronomonas pharaonis (strain ATCC 35678 / DSM 2160 / CIP 103997 / JCM 8858 / NBRC 14720 / NCIMB 2260 / Gabara) (Halobacterium pharaonis).